We begin with the raw amino-acid sequence, 860 residues long: MQEQYRPEEIESKVQLHWDEKRTFEVTEDESKEKYYCLSMLPYPSGRLHMGHVRNYTIGDVIARYQRMLGKNVLQPIGWDAFGLPAEGAAVKNNTAPAPWTYDNIAYMKNQLKMLGFGYDWSRELATCTPEYYRWEQKFFTELYKKGLVYKKTSAVNWCPNDQTVLANEQVIDGCCWRCDTKVERKEIPQWFIKITAYADELLNDLDKLDHWPDTVKSMQRNWIGRSEGVEITFNVNDYDNTLTVYTTRPDTFMGCTYLAVAAGHPLAQKAAENNPELAAFIDECRNTKVAEAEMATMEKKGVDTGFKAVHPLTGEEIPVWAANFVLMEYGTGAVMAVPGHDQRDYEFASKYGLNIKPVILAADGSEPDLSQQALTEKGVLFNSGEFNGLDHEAAFNAIADKLTAMGVGERKVNYRLRDWGVSRQRYWGAPIPMVTLEDGTVMPTPDDQLPVILPEDVVMDGITSPIKADPEWAKTTVNGMPALRETDTFDTFMESSWYYARYTCPEYKEGMLDSEAANYWLPVDIYIGGIEHAIMHLLYFRFFHKLMRDAGMVNSDEPAKQLLCQGMVLADAFYYVGENGERNWVSPVDAIVERDEKGRIVKAKDAAGHELVYTGMSKMSKSKNNGIDPQVMVERYGADTVRLFMMFASPADMTLEWQESGVEGANRFLKRVWKLVYEHTAKGDVAALNVDGLTEDQKALRRDVHKTIAKVTDDIGRRQTFNTAIAAIMELMNKLAKAPTDGEQDRALMQEALLAVVRMLNPFTPHICFTLWQELKGEGDIDNAPWPVADEKAMVEDSTLVVVQVNGKVRAKITVPVDATEEQVRERAGQEHLVAKYLDGVTVRKVIYVPGKLLNLVVG.

Residues 42–52 (PYPSGRLHMGH) carry the 'HIGH' region motif. Positions 619-623 (KMSKS) match the 'KMSKS' region motif. Lysine 622 serves as a coordination point for ATP.

It belongs to the class-I aminoacyl-tRNA synthetase family.

The protein resides in the cytoplasm. The catalysed reaction is tRNA(Leu) + L-leucine + ATP = L-leucyl-tRNA(Leu) + AMP + diphosphate. The protein is Leucine--tRNA ligase of Shigella boydii serotype 18 (strain CDC 3083-94 / BS512).